The following is a 208-amino-acid chain: Large ribosomal subunit protein uL4 (208 aa).

The segment at 46–84 is disordered; the sequence is QGTHKAKTRAEVRGGGRKPFRQKGTGNARQGSTRSPLMI. Residues 69–80 are compositionally biased toward polar residues; it reads GTGNARQGSTRS.

Belongs to the universal ribosomal protein uL4 family. As to quaternary structure, part of the 50S ribosomal subunit.

Its function is as follows. One of the primary rRNA binding proteins, this protein initially binds near the 5'-end of the 23S rRNA. It is important during the early stages of 50S assembly. It makes multiple contacts with different domains of the 23S rRNA in the assembled 50S subunit and ribosome. Forms part of the polypeptide exit tunnel. The polypeptide is Large ribosomal subunit protein uL4 (Chlorobium limicola (strain DSM 245 / NBRC 103803 / 6330)).